Consider the following 417-residue polypeptide: Actin-like protein 7B (417 aa).

A disordered region spans residues Met-1 to Gln-39. Ser-8 carries the phosphoserine modification.

This sequence belongs to the actin family.

It is found in the cytoplasm. Its subcellular location is the cytoskeleton. The protein is Actin-like protein 7B (Actl7b) of Rattus norvegicus (Rat).